The primary structure comprises 493 residues: NADH-quinone oxidoreductase subunit M (493 aa).

14 helical membrane-spanning segments follow: residues 5 to 25 (PIISISIFLPLISVLYILLFI), 37 to 57 (VMYVAVLSSVLTFISTIYILI), 89 to 109 (ISILFVVLTSFLTLICIIGSL), 115 to 135 (YIKEYLVCFLLMESFCIGAFT), 139 to 159 (LLLFYLFFEAILVPMYIIIGV), 172 to 192 (FFLYTFFGSVFFLLSLIYIYS), 216 to 236 (ILWWAIFIAFAVKIPIIPFHT), 251 to 271 (VILAGILLKLGGYGFLRVLLP), 280 to 300 (FAIYVIYLSVIAIIYASLVAL), 308 to 328 (MIAYSSIAHMGYVTIGIFSFT), 334 to 354 (GAIFQMLSHGVISSCLFLIVG), 375 to 395 (MPVLAAFFMIAMLGSVGLPGT), 411 to 431 (VNVVATFIAALGIIFGAVYML), and 458 to 478 (IISIAPLILLIIYFGLMPSSI).

The protein belongs to the complex I subunit 4 family.

It localises to the cell membrane. The enzyme catalyses a quinone + NADH + 5 H(+)(in) = a quinol + NAD(+) + 4 H(+)(out). Its function is as follows. NDH-1 shuttles electrons from NADH, via FMN and iron-sulfur (Fe-S) centers, to quinones in the respiratory chain. Couples the redox reaction to proton translocation (for every two electrons transferred, four hydrogen ions are translocated across the cytoplasmic membrane), and thus conserves the redox energy in a proton gradient. The polypeptide is NADH-quinone oxidoreductase subunit M (nuoM) (Rickettsia conorii (strain ATCC VR-613 / Malish 7)).